We begin with the raw amino-acid sequence, 220 residues long: Uracil-DNA glycosylase (220 aa).

Residue Asp-65 is the Proton acceptor of the active site.

This sequence belongs to the uracil-DNA glycosylase (UDG) superfamily. UNG family.

Its subcellular location is the cytoplasm. The catalysed reaction is Hydrolyzes single-stranded DNA or mismatched double-stranded DNA and polynucleotides, releasing free uracil.. In terms of biological role, excises uracil residues from the DNA which can arise as a result of misincorporation of dUMP residues by DNA polymerase or due to deamination of cytosine. This is Uracil-DNA glycosylase from Phocaeicola vulgatus (strain ATCC 8482 / DSM 1447 / JCM 5826 / CCUG 4940 / NBRC 14291 / NCTC 11154) (Bacteroides vulgatus).